We begin with the raw amino-acid sequence, 490 residues long: Protein dead ringer homolog (490 aa).

Residues 1 to 33 (MVEDQRRQLMEEEDEERRLILEEQRRRMMRADR) are compositionally biased toward basic and acidic residues. Disordered regions lie at residues 1-77 (MVED…AHID) and 106-135 (ITQSPPLTNGSNHDNDHDPYLSHRAAHGGS). Over residues 34 to 50 (DEEEEEEEEEEEEEREE) the composition is skewed to acidic residues. A compositionally biased stretch (basic and acidic residues) spans 51–76 (DDGRRSEDEMREDEPPGRRETSHAHI). Positions 106–117 (ITQSPPLTNGSN) are enriched in polar residues. The ARID domain maps to 202–294 (DSKRKEFLDD…YLYPYECEKK (93 aa)). The disordered stretch occupies residues 298-369 (SPSELQSAID…PPRLSPSTSP (72 aa)). Over residues 316 to 325 (PSYHSPHMHP) the composition is skewed to basic residues. The REKLES domain maps to 389-479 (AAMLAELAER…GVLYPRGGTR (91 aa)).

It localises to the nucleus. Transcription factor involved in skeletogenesis and oral ectoderm patterning. The chain is Protein dead ringer homolog (dri) from Strongylocentrotus purpuratus (Purple sea urchin).